The primary structure comprises 357 residues: Phospho-N-acetylmuramoyl-pentapeptide-transferase (357 aa).

10 helical membrane passes run Gln-4–Ile-24, Thr-52–Ile-72, Pro-77–Leu-97, Ala-115–Ala-135, Phe-153–Met-173, Leu-186–Phe-206, Pro-228–Trp-248, Ile-255–Cys-275, Leu-280–Val-300, and Phe-334–Ala-354.

The protein belongs to the glycosyltransferase 4 family. MraY subfamily. Mg(2+) is required as a cofactor.

The protein localises to the cell membrane. The catalysed reaction is UDP-N-acetyl-alpha-D-muramoyl-L-alanyl-gamma-D-glutamyl-meso-2,6-diaminopimeloyl-D-alanyl-D-alanine + di-trans,octa-cis-undecaprenyl phosphate = di-trans,octa-cis-undecaprenyl diphospho-N-acetyl-alpha-D-muramoyl-L-alanyl-D-glutamyl-meso-2,6-diaminopimeloyl-D-alanyl-D-alanine + UMP. It functions in the pathway cell wall biogenesis; peptidoglycan biosynthesis. Functionally, catalyzes the initial step of the lipid cycle reactions in the biosynthesis of the cell wall peptidoglycan: transfers peptidoglycan precursor phospho-MurNAc-pentapeptide from UDP-MurNAc-pentapeptide onto the lipid carrier undecaprenyl phosphate, yielding undecaprenyl-pyrophosphoryl-MurNAc-pentapeptide, known as lipid I. The polypeptide is Phospho-N-acetylmuramoyl-pentapeptide-transferase (Streptomyces avermitilis (strain ATCC 31267 / DSM 46492 / JCM 5070 / NBRC 14893 / NCIMB 12804 / NRRL 8165 / MA-4680)).